A 282-amino-acid polypeptide reads, in one-letter code: D-alanine aminotransferase (282 aa).

Y32 contacts substrate. R51 is a binding site for pyridoxal 5'-phosphate. The substrate site is built by R99 and H101. K146 (proton acceptor) is an active-site residue. K146 is modified (N6-(pyridoxal phosphate)lysine). E178 is a binding site for pyridoxal 5'-phosphate.

The protein belongs to the class-IV pyridoxal-phosphate-dependent aminotransferase family. Homodimer. It depends on pyridoxal 5'-phosphate as a cofactor.

The catalysed reaction is D-alanine + 2-oxoglutarate = D-glutamate + pyruvate. Functionally, acts on the D-isomers of alanine, leucine, aspartate, glutamate, aminobutyrate, norvaline and asparagine. The enzyme transfers an amino group from a substrate D-amino acid to the pyridoxal phosphate cofactor to form pyridoxamine and an alpha-keto acid in the first half-reaction. The second half-reaction is the reverse of the first, transferring the amino group from the pyridoxamine to a second alpha-keto acid to form the product D-amino acid via a ping-pong mechanism. This is an important process in the formation of D-alanine and D-glutamate, which are essential bacterial cell wall components. This chain is D-alanine aminotransferase (dat), found in Staphylococcus aureus (strain N315).